The sequence spans 346 residues: MTPNGSRRHSAYMGSPRSQHSSTMETGYNPYEAVQKKQELYQNNNGNSPTVIIEEDPYIPNYKESSLANKKTNYNMKIVVVGDGGCGKTCLLLAYTQNKFPSIYVPTVFENYVTAVQSPNGKTVELALWDTAGQEEYDRLRPLSYPDVDILLVCFAVDNEVSLENVKDMWFPEVNHYCPGIPIILVGTKSDLSSDMNHDASIRVAKEIGAIGLIFTSAKTMFNVRTVFNFALNHFQRNMELQEQYEKTLGSRKRISRVLGGSNGGSGNHSRHHSRNYSNVSNNRRGHLKNTSYDSTALLDQPLTEDTYVKNPYGNFGYKANVESPYNQDEFAFTRERKKKKKCVIL.

Residues 1–10 (MTPNGSRRHS) are compositionally biased toward basic residues. Positions 1–25 (MTPNGSRRHSAYMGSPRSQHSSTME) are disordered. The span at 16–25 (PRSQHSSTME) shows a compositional bias: polar residues. 82–89 (GDGGCGKT) serves as a coordination point for GTP. An Effector region motif is present at residues 104–112 (YVPTVFENY). GTP-binding positions include 130-134 (DTAGQ) and 188-191 (TKSD). Positions 259–294 (LGGSNGGSGNHSRHHSRNYSNVSNNRRGHLKNTSYD) are disordered. Position 343 is a cysteine methyl ester (Cys-343). Cys-343 carries S-geranylgeranyl cysteine lipidation. Residues 344-346 (VIL) constitute a propeptide, removed in mature form.

Belongs to the small GTPase superfamily. Rho family.

It localises to the cell membrane. This is GTP-binding RHO-like protein (CRL1) from Candida albicans (strain WO-1) (Yeast).